The primary structure comprises 700 residues: Glutamine synthetase (700 aa).

The 91-residue stretch at 65-155 (YHFTPPGSSP…LPTAFCSYGG (91 aa)) folds into the GS beta-grasp domain. The region spanning 159–589 (DRDSLLRSME…TMQEMIRKDL (431 aa)) is the GS catalytic domain. Residues glutamate 196, glutamate 198, glutamate 267, and glutamate 274 each contribute to the Mg(2+) site. L-glutamate contacts are provided by residues 318–319 (NG) and glycine 319. Histidine 323 is a Mg(2+) binding site. ATP contacts are provided by serine 327 and arginine 435. Arginine 435 is a binding site for L-glutamate. Glutamate 472 is a binding site for Mg(2+).

This sequence belongs to the glutamine synthetase family. In terms of assembly, homohexamer. Requires Mg(2+) as cofactor.

The protein localises to the cytoplasm. It carries out the reaction L-glutamate + NH4(+) + ATP = L-glutamine + ADP + phosphate + H(+). The activity of this enzyme is not controlled by adenylation. Catalyzes the ATP-dependent biosynthesis of glutamine from glutamate and ammonia. The protein is Glutamine synthetase of Butyrivibrio fibrisolvens.